A 456-amino-acid polypeptide reads, in one-letter code: Adenylosuccinate synthetase isozyme 2 (456 aa).

Residues 1–24 (MAFAETNPAASSLPNGDCGRPRAR) form a disordered region. GTP-binding positions include 39 to 45 (GDEGKGK) and 67 to 69 (GHT). D40 serves as the catalytic Proton acceptor. Positions 40 and 67 each coordinate Mg(2+). A substrate-binding site is contributed by D40. Residues 40-43 (DEGK), 65-68 (NAGH), T162, R176, N255, T270, and R334 each bind IMP. H68 acts as the Proton donor in catalysis. 330-336 (VTTGRKR) serves as a coordination point for substrate. Residues R336, 362–364 (KLD), and 444–447 (GVGK) each bind GTP.

The protein belongs to the adenylosuccinate synthetase family. As to quaternary structure, homodimer. Requires Mg(2+) as cofactor. Widely expressed.

The protein localises to the cytoplasm. It is found in the mitochondrion. The catalysed reaction is IMP + L-aspartate + GTP = N(6)-(1,2-dicarboxyethyl)-AMP + GDP + phosphate + 2 H(+). It functions in the pathway purine metabolism; AMP biosynthesis via de novo pathway; AMP from IMP: step 1/2. Its activity is regulated as follows. Inhibited competitively by AMP and IMP and non-competitively by fructose 1,6-bisphosphate. Its function is as follows. Plays an important role in the de novo pathway and in the salvage pathway of purine nucleotide biosynthesis. Catalyzes the first committed step in the biosynthesis of AMP from IMP. The polypeptide is Adenylosuccinate synthetase isozyme 2 (Sus scrofa (Pig)).